The sequence spans 294 residues: Phosphonoacetaldehyde hydrolase (294 aa).

Catalysis depends on Asp-19, which acts as the Nucleophile. Residues Asp-19 and Ala-21 each contribute to the Mg(2+) site. The Schiff-base intermediate with substrate role is filled by Lys-60. Asp-193 contacts Mg(2+).

This sequence belongs to the HAD-like hydrolase superfamily. PhnX family. Homodimer. The cofactor is Mg(2+).

The catalysed reaction is phosphonoacetaldehyde + H2O = acetaldehyde + phosphate + H(+). In terms of biological role, involved in phosphonate degradation. This chain is Phosphonoacetaldehyde hydrolase, found in Hahella chejuensis (strain KCTC 2396).